The following is a 63-amino-acid chain: Large ribosomal subunit protein uL29 (63 aa).

This sequence belongs to the universal ribosomal protein uL29 family.

The polypeptide is Large ribosomal subunit protein uL29 (Pectobacterium atrosepticum (strain SCRI 1043 / ATCC BAA-672) (Erwinia carotovora subsp. atroseptica)).